Here is a 497-residue protein sequence, read N- to C-terminus: Kynureninase (497 aa).

Positions 59 to 86 are disordered; the sequence is GRLPAYPPNHAKPGETATAQNGTSNTND. Over residues 75–86 the composition is skewed to polar residues; the sequence is ATAQNGTSNTND. Pyridoxal 5'-phosphate is bound by residues Leu-166, Thr-167, 194-197, Asp-278, His-281, and Tyr-303; that span reads FPSD. Lys-304 is subject to N6-(pyridoxal phosphate)lysine. Pyridoxal 5'-phosphate is bound by residues Trp-337 and Asn-365.

It belongs to the kynureninase family. Homodimer. Pyridoxal 5'-phosphate is required as a cofactor.

The protein localises to the cytoplasm. The enzyme catalyses L-kynurenine + H2O = anthranilate + L-alanine + H(+). The catalysed reaction is 3-hydroxy-L-kynurenine + H2O = 3-hydroxyanthranilate + L-alanine + H(+). It functions in the pathway amino-acid degradation; L-kynurenine degradation; L-alanine and anthranilate from L-kynurenine: step 1/1. It participates in cofactor biosynthesis; NAD(+) biosynthesis; quinolinate from L-kynurenine: step 2/3. Catalyzes the cleavage of L-kynurenine (L-Kyn) and L-3-hydroxykynurenine (L-3OHKyn) into anthranilic acid (AA) and 3-hydroxyanthranilic acid (3-OHAA), respectively. This is Kynureninase from Pyricularia oryzae (strain 70-15 / ATCC MYA-4617 / FGSC 8958) (Rice blast fungus).